A 421-amino-acid polypeptide reads, in one-letter code: D-amino-acid oxidase (421 aa).

FAD-binding residues include A12, G13, A14, V15, G47, G64, I65, K225, A226, R359, G385, G388, and L389. R359 is a binding site for D-proline. Residue R359 participates in D-serine binding.

The protein belongs to the DAMOX/DASOX family. The cofactor is FAD.

Its subcellular location is the cytoplasm. The protein resides in the secreted. The protein localises to the cell wall. It carries out the reaction a D-alpha-amino acid + O2 + H2O = a 2-oxocarboxylate + H2O2 + NH4(+). Its function is as follows. Catalyzes the oxidative deamination of D-amino acids with broad substrate specificity. The polypeptide is D-amino-acid oxidase (Bradyrhizobium diazoefficiens (strain JCM 10833 / BCRC 13528 / IAM 13628 / NBRC 14792 / USDA 110)).